We begin with the raw amino-acid sequence, 711 residues long: Polyribonucleotide nucleotidyltransferase (711 aa).

Residues D490 and D496 each coordinate Mg(2+). A KH domain is found at 556–615 (PRIETMQIPTDKIREVIGSGGKVIREIVEVSGAKVDINDEGIIKIASPNGEAIKKAYDMI). Residues 625–693 (GMVYTGTVVK…DRGKVRLSMK (69 aa)) enclose the S1 motif domain.

It belongs to the polyribonucleotide nucleotidyltransferase family. Mg(2+) is required as a cofactor.

The protein localises to the cytoplasm. It catalyses the reaction RNA(n+1) + phosphate = RNA(n) + a ribonucleoside 5'-diphosphate. Involved in mRNA degradation. Catalyzes the phosphorolysis of single-stranded polyribonucleotides processively in the 3'- to 5'-direction. This is Polyribonucleotide nucleotidyltransferase from Roseobacter denitrificans (strain ATCC 33942 / OCh 114) (Erythrobacter sp. (strain OCh 114)).